Consider the following 96-residue polypeptide: Cytoplasmic envelopment protein 3 (96 aa).

Gly-2 carries N-myristoyl glycine; by host lipidation. Residues 37-43 form an asp/Glu-rich (acidic) region; sequence DIESEEE. The residue at position 40 (Ser-40) is a Phosphoserine. The interval 50 to 96 is disordered; sequence PDVRVVTRAPGPQYRRPSDPPSRHTRRRDPDVARPPATLTPPLSDSE. Residues 65–81 show a composition bias toward basic and acidic residues; sequence RPSDPPSRHTRRRDPDV.

The protein belongs to the herpesviridae cytoplasmic envelopment protein 3 family. Interacts with cytoplasmic envelopment protein 2; this interaction is essential for the proper localization of each protein to the assembly complex and thus for the production of infectious virus. Interacts with gE (via C-terminus). Interacts with gD (via C-terminus). Interacts with UL56. Myristoylation and palmitoylation (probably on one or more of the nearby cysteines at the N-terminus) enable membrane-binding and Golgi apparatus-specific targeting and are essential for efficient packaging. Post-translationally, phosphorylated. Phosphorylation does not seem to be required for recycling to the host Golgi apparatus. Packaging is selective for underphosphorylated forms.

Its subcellular location is the virion tegument. It localises to the virion membrane. The protein localises to the host cell membrane. It is found in the host Golgi apparatus membrane. Plays an important role in the cytoplasmic envelopment of tegument proteins and capsids during the assembly and egress processes. Also participates in viral entry at the fusion step probably by regulating the core fusion machinery. In Homo sapiens (Human), this protein is Cytoplasmic envelopment protein 3.